A 346-amino-acid chain; its full sequence is Elongation factor Ts (346 aa).

An involved in Mg(2+) ion dislocation from EF-Tu region spans residues 80–83; sequence TDFV.

Belongs to the EF-Ts family.

It is found in the cytoplasm. In terms of biological role, associates with the EF-Tu.GDP complex and induces the exchange of GDP to GTP. It remains bound to the aminoacyl-tRNA.EF-Tu.GTP complex up to the GTP hydrolysis stage on the ribosome. The chain is Elongation factor Ts from Streptococcus pneumoniae serotype 19F (strain G54).